Reading from the N-terminus, the 188-residue chain is Elongation factor P-like protein (188 aa).

Belongs to the elongation factor P family.

In Stenotrophomonas maltophilia (strain R551-3), this protein is Elongation factor P-like protein.